A 278-amino-acid polypeptide reads, in one-letter code: MPDQALQQMLDRSCWVCFATDEDDRTAEWVRPCRCRGSTKWVHQACLQRWVDEKQRGNSTARVACPQCNAEYLIVFPKLGPVVYVLDLADRLISKACPFAAAGIMVGSIYWTAVTYGAVTVMQVVGHKEGLDVMERADPLFLLIGLPTIPVMLILGKMIRWEDYVLRLWRKYSNKLQILNSIFPGIGCPVPRIPAEANPLADHVSATRILCGALVFPTIATIVGKLMFSSVNSNLQRTILGGIAFVAIKGAFKVYFKQQQYLRQAHRKILNYPEQEEA.

The segment at 6 to 75 adopts an RING-CH-type zinc-finger fold; the sequence is LQQMLDRSCW…PQCNAEYLIV (70 aa). Residues cysteine 14, cysteine 17, cysteine 33, cysteine 35, histidine 43, cysteine 46, cysteine 65, and cysteine 68 each coordinate Zn(2+). 4 helical membrane-spanning segments follow: residues 99–119, 139–159, 209–229, and 238–258; these read FAAA…YGAV, PLFL…GKMI, ILCG…LMFS, and TILG…YFKQ.

Monomer and homodimer. Interacts with MFN1, MFN2, DNM1L and FIS1. Autoubiquitinated leading to degradation (short half-life).

It localises to the mitochondrion outer membrane. It carries out the reaction S-ubiquitinyl-[E2 ubiquitin-conjugating enzyme]-L-cysteine + [acceptor protein]-L-lysine = [E2 ubiquitin-conjugating enzyme]-L-cysteine + N(6)-ubiquitinyl-[acceptor protein]-L-lysine.. It participates in protein modification; protein ubiquitination. Its function is as follows. Mitochondrial E3 ubiquitin-protein ligase that plays a crucial role in the control of mitochondrial morphology by acting as a positive regulator of mitochondrial fission and as an important regulator of immune response. Plays a crucial role in maintaining mitochondrial homeostasis by regulating the dynamics of mitochondria through the ubiquitination of key proteins involved in fission and fusion such as FIS1, DNM1L and MFN1. Acts as a critical determinant of mitotic apoptosis through both MCL1-dependent and -independent pathways. Turns off persistent immune signaling by degrading oligomeric complexes of retinoic acid-inducible gene I/DDX58 and mitochondrial antiviral-signaling protein/MAVS formed upon RNA virus infection. Promotes STING-mediated type-I interferon production via 'Lys-63'-linked ubiquitination of STING1 thereby preserving its activity and preventing the formation of inactive STING1 polymers. Plays also an essential role in the formation of PEX3-containing vesicles in the de novo biogenesis of peroxisomes from mitochondria. Acts as a regulator of NLRP3 inflammasome activation on the mitochondria by mediating the 'Lys-27'-linked polyubiquitination of NLRP3, positively regulating the NLRP3-NEK7 complex formation and NLRP3 oligomerization. The chain is E3 ubiquitin-protein ligase MARCHF5 (MARCHF5) from Bos taurus (Bovine).